Reading from the N-terminus, the 367-residue chain is Peptide chain release factor 1 (367 aa).

The residue at position 243 (Gln243) is an N5-methylglutamine.

It belongs to the prokaryotic/mitochondrial release factor family. In terms of processing, methylated by PrmC. Methylation increases the termination efficiency of RF1.

The protein resides in the cytoplasm. In terms of biological role, peptide chain release factor 1 directs the termination of translation in response to the peptide chain termination codons UAG and UAA. The chain is Peptide chain release factor 1 from Acidovorax ebreus (strain TPSY) (Diaphorobacter sp. (strain TPSY)).